A 318-amino-acid polypeptide reads, in one-letter code: Galactofuranose-binding protein YtfQ (318 aa).

Residues 1 to 21 (MWKRLLIVSAVSAAMSSMALA) form the signal peptide. Residues 34-38 (ESGWR), 111-112 (DR), Arg167, Asn220, and Asp248 each bind beta-D-galactofuranose. Cys150 and Cys214 are disulfide-bonded.

This sequence belongs to the bacterial solute-binding protein 2 family. The complex is composed of two ATP-binding proteins (YtfR), two transmembrane proteins (YtfT and YjfF) and a solute-binding protein (YtfQ).

Its subcellular location is the periplasm. Part of the ABC transporter complex YtfQRT-YjfF involved in galactofuranose transport. Binds to both alpha- and beta-galactofuranose. This is Galactofuranose-binding protein YtfQ (ytfQ) from Escherichia coli (strain K12).